The following is a 175-amino-acid chain: MSTIAKDQTQINDKIRAKELRLISQDGEQIGVKSKREALEMAERVDLDLVVVAPNAKPPVARIMDYGKFKFEQQKKEKEMKKKQKIINVKEIRLSPTIEEHDFQTKLKNGRKFLTKGDKCKVSIRFRGRAITHKEIGQRVLEKYADECKDIATVEQKPKMDGRQMFIMLAPTAEK.

It belongs to the IF-3 family. As to quaternary structure, monomer.

Its subcellular location is the cytoplasm. Its function is as follows. IF-3 binds to the 30S ribosomal subunit and shifts the equilibrium between 70S ribosomes and their 50S and 30S subunits in favor of the free subunits, thus enhancing the availability of 30S subunits on which protein synthesis initiation begins. This chain is Translation initiation factor IF-3, found in Staphylococcus aureus (strain MRSA252).